The chain runs to 115 residues: Ribonuclease P protein component (115 aa).

This sequence belongs to the RnpA family. In terms of assembly, consists of a catalytic RNA component (M1 or rnpB) and a protein subunit.

It carries out the reaction Endonucleolytic cleavage of RNA, removing 5'-extranucleotides from tRNA precursor.. Functionally, RNaseP catalyzes the removal of the 5'-leader sequence from pre-tRNA to produce the mature 5'-terminus. It can also cleave other RNA substrates such as 4.5S RNA. The protein component plays an auxiliary but essential role in vivo by binding to the 5'-leader sequence and broadening the substrate specificity of the ribozyme. The sequence is that of Ribonuclease P protein component from Bacillus cereus (strain 03BB102).